The sequence spans 293 residues: Protease HtpX (293 aa).

A run of 2 helical transmembrane segments spans residues 2–22 and 38–58; these read FRILLFLATNIAVVLVASVTL and LTSLLIFCAVFGMSGAMISLF. A Zn(2+)-binding site is contributed by H145. E146 is an active-site residue. H149 provides a ligand contact to Zn(2+). Transmembrane regions (helical) follow at residues 156-176 and 193-213; these read VTLALIQGVINTFVMFFARII and IGFFITTIFAEIVLGILASII. E222 is a binding site for Zn(2+).

It belongs to the peptidase M48B family. Zn(2+) is required as a cofactor.

It localises to the cell inner membrane. This chain is Protease HtpX, found in Hahella chejuensis (strain KCTC 2396).